The following is a 217-amino-acid chain: MSKITTTHVRDNVKELLKYSNETKKRNFLETVELQVGLKNYDPQRDKRFSGTLKLPVCPRPNMSVCIFGDAFDVDRAKSCGVDAMSVDDLKKLNKNKKLIKKLAKKYNAFIASEVLIKQVPRLLGPQLSKAGKFPTPVSHNDDLYSKVTDVRSTIKFQLKKVLCLAVAVGNVEMDEDTLVNQILMSVNFLVSLLKKNWQNVGSLVIKSTMGPAFRLY.

Belongs to the universal ribosomal protein uL1 family.

The sequence is that of Large ribosomal subunit protein uL1 (RPL10A) from Eremothecium gossypii (strain ATCC 10895 / CBS 109.51 / FGSC 9923 / NRRL Y-1056) (Yeast).